A 628-amino-acid chain; its full sequence is Chaperone protein DnaK (628 aa).

Phosphothreonine; by autocatalysis is present on Thr197. The segment at 597-628 (EQMYKGEQGAQGGAADTSKKKSDDDVIDAEIE) is disordered.

The protein belongs to the heat shock protein 70 family.

Functionally, acts as a chaperone. This chain is Chaperone protein DnaK, found in Sulfurimonas denitrificans (strain ATCC 33889 / DSM 1251) (Thiomicrospira denitrificans (strain ATCC 33889 / DSM 1251)).